The chain runs to 293 residues: Ribosomal protein L11 methyltransferase (293 aa).

S-adenosyl-L-methionine-binding residues include Thr-145, Gly-166, Asp-188, and Asn-230.

It belongs to the methyltransferase superfamily. PrmA family.

The protein resides in the cytoplasm. It carries out the reaction L-lysyl-[protein] + 3 S-adenosyl-L-methionine = N(6),N(6),N(6)-trimethyl-L-lysyl-[protein] + 3 S-adenosyl-L-homocysteine + 3 H(+). In terms of biological role, methylates ribosomal protein L11. The chain is Ribosomal protein L11 methyltransferase from Shewanella baltica (strain OS195).